Consider the following 446-residue polypeptide: Maltoporin (446 aa).

A signal peptide spans methionine 1–alanine 25.

The protein belongs to the porin LamB (TC 1.B.3) family. As to quaternary structure, homotrimer formed of three 18-stranded antiparallel beta-barrels, containing three independent channels.

Its subcellular location is the cell outer membrane. It carries out the reaction beta-maltose(in) = beta-maltose(out). Its function is as follows. Involved in the transport of maltose and maltodextrins. The sequence is that of Maltoporin from Escherichia coli O8 (strain IAI1).